The sequence spans 239 residues: tRNA (guanine-N(1)-)-methyltransferase (239 aa).

S-adenosyl-L-methionine-binding positions include glycine 108 and leucine 127 to leucine 132.

This sequence belongs to the RNA methyltransferase TrmD family. In terms of assembly, homodimer.

It is found in the cytoplasm. It catalyses the reaction guanosine(37) in tRNA + S-adenosyl-L-methionine = N(1)-methylguanosine(37) in tRNA + S-adenosyl-L-homocysteine + H(+). Functionally, specifically methylates guanosine-37 in various tRNAs. This chain is tRNA (guanine-N(1)-)-methyltransferase, found in Streptococcus pneumoniae (strain JJA).